Here is a 175-residue protein sequence, read N- to C-terminus: uncharacterized protein (175 aa).

The interval 113 to 175 (AQLPRDSRGN…RTRSGGLERL (63 aa)) is disordered.

This is an uncharacterized protein from Bos taurus (Bovine).